The primary structure comprises 254 residues: UPF0603 protein YdjH (254 aa).

The N-terminal stretch at 1 to 29 (MRGFFGKAIFVVLAVFIMMPLLGIEAVRA) is a signal peptide. Residues 166 to 186 (IFFTWWFQLIAAIAVGGIAVS) traverse the membrane as a helical segment. Basic and acidic residues predominate over residues 223–235 (VTRERKPSDKDSG). The tract at residues 223-254 (VTRERKPSDKDSGSDGGVTKGGTSYSGSRGSF) is disordered. Over residues 243-254 (GGTSYSGSRGSF) the composition is skewed to polar residues.

It belongs to the UPF0603 family.

Its subcellular location is the cell membrane. The sequence is that of UPF0603 protein YdjH (ydjH) from Bacillus subtilis (strain 168).